We begin with the raw amino-acid sequence, 162 residues long: NADH-quinone oxidoreductase subunit I (162 aa).

2 consecutive 4Fe-4S ferredoxin-type domains span residues 52–82 (LRRYPNGEERCIACKLCEAICPAKAITIEAG) and 93–122 (TRYDIDMVKCIYCGFCQEACPVDAIVEGPN). Positions 62, 65, 68, 72, 102, 105, 108, and 112 each coordinate [4Fe-4S] cluster.

The protein belongs to the complex I 23 kDa subunit family. In terms of assembly, NDH-1 is composed of 14 different subunits. Subunits NuoA, H, J, K, L, M, N constitute the membrane sector of the complex. It depends on [4Fe-4S] cluster as a cofactor.

The protein resides in the cell inner membrane. It carries out the reaction a quinone + NADH + 5 H(+)(in) = a quinol + NAD(+) + 4 H(+)(out). In terms of biological role, NDH-1 shuttles electrons from NADH, via FMN and iron-sulfur (Fe-S) centers, to quinones in the respiratory chain. The immediate electron acceptor for the enzyme in this species is believed to be ubiquinone. Couples the redox reaction to proton translocation (for every two electrons transferred, four hydrogen ions are translocated across the cytoplasmic membrane), and thus conserves the redox energy in a proton gradient. The protein is NADH-quinone oxidoreductase subunit I of Beijerinckia indica subsp. indica (strain ATCC 9039 / DSM 1715 / NCIMB 8712).